We begin with the raw amino-acid sequence, 383 residues long: L-lactate dehydrogenase (383 aa).

The region spanning 1-380 is the FMN hydroxy acid dehydrogenase domain; it reads MIISSGNDYR…NADCLVQAIK (380 aa). A substrate-binding site is contributed by tyrosine 24. FMN-binding residues include serine 106 and glutamine 127. Tyrosine 129 lines the substrate pocket. An FMN-binding site is contributed by threonine 155. Arginine 164 is a substrate binding site. Lysine 251 provides a ligand contact to FMN. Catalysis depends on histidine 275, which acts as the Proton acceptor. Arginine 278 provides a ligand contact to substrate. 306–330 is an FMN binding site; that stretch reads DSGIRNGLDVVRMLALGADTVLLGR.

The protein belongs to the FMN-dependent alpha-hydroxy acid dehydrogenase family. The cofactor is FMN.

Its subcellular location is the cell inner membrane. It carries out the reaction (S)-lactate + A = pyruvate + AH2. In terms of biological role, catalyzes the conversion of L-lactate to pyruvate. Is coupled to the respiratory chain. This chain is L-lactate dehydrogenase, found in Acinetobacter baumannii (strain AB307-0294).